The chain runs to 495 residues: OTU domain-containing protein CG3251 (495 aa).

The 122-residue stretch at 29–150 (LFRKHMLGDA…MGHFETVLTM (122 aa)) folds into the OTU domain. Residues 302–364 (NFKVGAKCQV…HPLPPDEFKA (63 aa)) form the Tudor domain. Residues 375-389 (LHNSQMGRQSVQGDQ) show a composition bias toward polar residues. Positions 375-404 (LHNSQMGRQSVQGDQQGFVPDPMPGTAPSM) are disordered. Over residues 395-404 (DPMPGTAPSM) the composition is skewed to pro residues.

Putative OTU-type deubiquitinase. Catalytically inactive towards all diubiquitin molecules and long K48- and K63- linked ubiquitin chains in vitro. Potential modulator of apoptosis. The chain is OTU domain-containing protein CG3251 from Drosophila melanogaster (Fruit fly).